The primary structure comprises 1003 residues: PHD finger protein 12 (1003 aa).

The disordered stretch occupies residues 29–59; it reads APPKTDEAEKRSRKPEKESRRSGRATNHDSC. Over residues 32–59 the composition is skewed to basic and acidic residues; the sequence is KTDEAEKRSRKPEKESRRSGRATNHDSC. The segment at 56 to 105 adopts a PHD-type 1 zinc-finger fold; the sequence is HDSCDSCKEGGDLLCCDHCPAAFHLQCCNPPLSEEMLPPGEWMCHRCTVR. Zn(2+) contacts are provided by C59, S61, C62, H79, and C82. 2 disordered regions span residues 110–183 and 234–255; these read EQKK…HNDV and TTAL…KNVK. A phosphoserine mark is found at S131 and S134. Basic and acidic residues predominate over residues 138–161; sequence LLDRPASKTELKAIAHARILERRA. Residues 165 to 178 are compositionally biased toward polar residues; sequence GTPTSNASTETPTS. The segment at 202-241 is SIN3 interacting domain 1; the sequence is VQPQLRRPFELLIAAAMERNPTQFQLPNELTCTTALPGSS. Residues 271 to 321 form a PHD-type 2; atypical zinc finger; it reads VKVCFTCNRSCRVAPLIQCDYCPLLFHMDCLEPPLTAMPLGRWMCPNHIEH. C274, C277, C289, C292, H297, C300, C315, and H318 together coordinate Zn(2+). The segment at 328–364 is SIN3 interacting domain 2; it reads NLTLSNRCQVFDRFQDTISQHVVKVDFLNRIHKKHPP. A Glycyl lysine isopeptide (Lys-Gly) (interchain with G-Cter in SUMO2) cross-link involves residue K467. Disordered regions lie at residues 531-583 and 641-671; these read KAPC…GWPR and HRKT…VLTP. S555 carries the phosphoserine modification. A phosphothreonine mark is found at T557 and T570. A compositionally biased stretch (polar residues) spans 641 to 656; sequence HRKTVQSQIGPSSTES. T670 carries the phosphothreonine modification. Positions 814-868 constitute an FHA domain; sequence LYIGTGADMDVCLTNYGHCNYVSGKHACIFYDENTKHYELLNYSEHGTTVDNVLY. Residues 894-922 form a disordered region; the sequence is RRRHQKQDEEPSEEAAMMSSQAQGPQRRP. K899 participates in a covalent cross-link: Glycyl lysine isopeptide (Lys-Gly) (interchain with G-Cter in SUMO2). A compositionally biased stretch (low complexity) spans 907–916; sequence EAAMMSSQAQ. Glycyl lysine isopeptide (Lys-Gly) (interchain with G-Cter in SUMO2) cross-links involve residues K972, K986, and K990.

Component of SIN3 complexes. Interacts with SIN3A in a complex composed of HDAC1, SAP30 and SIN3A. Component of the SIN3B complex, which includes SIN3B, HDAC2 or HDAC1, PHF12 and MORF4L1; interacts directly with all subunits. Interacts with TLE5. In terms of tissue distribution, expressed mainly in heart, brain, lung, liver and testis.

The protein localises to the nucleus. Its function is as follows. Transcriptional repressor acting as key scaffolding subunit of SIN3 complexes which contributes to complex assembly by contacting each core subunit domain, stabilizes the complex and constitutes the substrate receptor by recruiting the H3 histone tail. SIN3 complexes are composed of a SIN3 scaffold subunit, one catalytic core (HDAC1 or HDAC2) and 2 chromatin targeting modules. SIN3B complex represses transcription and counteracts the histone acetyltransferase activity of EP300 through the recognition H3K27ac marks by PHF12 and the activity of the histone deacetylase HDAC2. SIN3B complex is recruited downstream of the constitutively active genes transcriptional start sites through interaction with histones and mitigates histone acetylation and RNA polymerase II progression within transcribed regions contributing to the regulation of transcription. May also repress transcription in a SIN3A-independent manner through recruitment of functional TLE5 complexes to DNA. May also play a role in ribosomal biogenesis. The sequence is that of PHD finger protein 12 from Mus musculus (Mouse).